Consider the following 358-residue polypeptide: UDP-N-acetylglucosamine--N-acetylmuramyl-(pentapeptide) pyrophosphoryl-undecaprenol N-acetylglucosamine transferase (358 aa).

Residues 12–14 (TGG), asparagine 124, arginine 162, serine 185, isoleucine 242, 261–266 (ALTVSE), and glutamine 287 contribute to the UDP-N-acetyl-alpha-D-glucosamine site.

This sequence belongs to the glycosyltransferase 28 family. MurG subfamily.

The protein localises to the cell inner membrane. The catalysed reaction is di-trans,octa-cis-undecaprenyl diphospho-N-acetyl-alpha-D-muramoyl-L-alanyl-D-glutamyl-meso-2,6-diaminopimeloyl-D-alanyl-D-alanine + UDP-N-acetyl-alpha-D-glucosamine = di-trans,octa-cis-undecaprenyl diphospho-[N-acetyl-alpha-D-glucosaminyl-(1-&gt;4)]-N-acetyl-alpha-D-muramoyl-L-alanyl-D-glutamyl-meso-2,6-diaminopimeloyl-D-alanyl-D-alanine + UDP + H(+). It participates in cell wall biogenesis; peptidoglycan biosynthesis. Cell wall formation. Catalyzes the transfer of a GlcNAc subunit on undecaprenyl-pyrophosphoryl-MurNAc-pentapeptide (lipid intermediate I) to form undecaprenyl-pyrophosphoryl-MurNAc-(pentapeptide)GlcNAc (lipid intermediate II). The sequence is that of UDP-N-acetylglucosamine--N-acetylmuramyl-(pentapeptide) pyrophosphoryl-undecaprenol N-acetylglucosamine transferase from Pseudoalteromonas translucida (strain TAC 125).